Here is a 367-residue protein sequence, read N- to C-terminus: Flagellin 2 (367 aa).

It belongs to the bacterial flagellin family.

Its subcellular location is the secreted. It localises to the bacterial flagellum. Functionally, flagellin is the subunit protein which polymerizes to form the filaments of bacterial flagella. This Proteus mirabilis protein is Flagellin 2 (fliC2).